A 292-amino-acid polypeptide reads, in one-letter code: NAD-dependent protein deacetylase sir-2.4 (292 aa).

Residues 31-292 (IEKLRTLYNH…DEVPIPLKIS (262 aa)) enclose the Deacetylase sirtuin-type domain. Residues 56 to 75 (GAGV…QGVW) and 116 to 119 (QNVD) contribute to the NAD(+) site. His-136 acts as the Proton acceptor in catalysis. Zn(2+) contacts are provided by Cys-144, Cys-147, Cys-163, and Cys-169. NAD(+) contacts are provided by residues 216–218 (GTS), 242–244 (NYQ), and Val-260.

The protein belongs to the sirtuin family. Class IV subfamily. Zn(2+) is required as a cofactor.

The catalysed reaction is N(6)-acetyl-L-lysyl-[protein] + NAD(+) + H2O = 2''-O-acetyl-ADP-D-ribose + nicotinamide + L-lysyl-[protein]. Functionally, NAD-dependent protein deacetylase. The sequence is that of NAD-dependent protein deacetylase sir-2.4 (sir-2.4) from Caenorhabditis elegans.